Here is a 93-residue protein sequence, read N- to C-terminus: Integration host factor subunit beta (93 aa).

It belongs to the bacterial histone-like protein family. In terms of assembly, heterodimer of an alpha and a beta chain.

This protein is one of the two subunits of integration host factor, a specific DNA-binding protein that functions in genetic recombination as well as in transcriptional and translational control. The polypeptide is Integration host factor subunit beta (ihfB) (Mannheimia haemolytica (Pasteurella haemolytica)).